The sequence spans 320 residues: MKRIGILTSGGDAPGMNAAIRAVTKTAIHHGLEVFGIRYGFAGLVAGDFVPLTTENVDHKISEGGTFLYSARFPEFAQEEVQQKGVEQLKKHGIDAVIVIGGDGSYHGALALTRHGVNSVGLPGTIDNDIPYTDYTIGFDSACRTAMDAIDKIRDTASSHHRVFVVNVMGRECGDIAMRVGVASGADAIVIPERPYDVKEIAETITRGFADGKDHGIIVLAEGVMTADKFKDELLKYGDFDARANVLAHMQRGGSPTVTDRVNATKMGNYAVKLLLDGKGGLAVGMENGQLSTHDILDLFDGKHHGDYALLDVNEEMTKY.

G11 lines the ATP pocket. Position 21–25 (21–25) interacts with ADP; sequence RAVTK. ATP contacts are provided by residues 72-73 and 102-105; these read RF and GDGS. Residue D103 participates in Mg(2+) binding. 125–127 is a substrate binding site; it reads TID. The Proton acceptor role is filled by D127. ADP is bound at residue R154. Substrate is bound by residues R162 and 169 to 171; that span reads MGR. ADP-binding positions include 185 to 187 and 213 to 215; these read GAD and KDH. Residues E222, R243, and 249-252 contribute to the substrate site; that span reads HMQR.

Belongs to the phosphofructokinase type A (PFKA) family. ATP-dependent PFK group I subfamily. Prokaryotic clade 'B1' sub-subfamily. In terms of assembly, homotetramer. Mg(2+) is required as a cofactor.

Its subcellular location is the cytoplasm. It carries out the reaction beta-D-fructose 6-phosphate + ATP = beta-D-fructose 1,6-bisphosphate + ADP + H(+). Its pathway is carbohydrate degradation; glycolysis; D-glyceraldehyde 3-phosphate and glycerone phosphate from D-glucose: step 3/4. Allosterically activated by ADP and other diphosphonucleosides, and allosterically inhibited by phosphoenolpyruvate. In terms of biological role, catalyzes the phosphorylation of D-fructose 6-phosphate to fructose 1,6-bisphosphate by ATP, the first committing step of glycolysis. This chain is ATP-dependent 6-phosphofructokinase, found in Lactobacillus helveticus (strain DPC 4571).